A 109-amino-acid chain; its full sequence is Large ribosomal subunit protein P1C (109 aa).

Residues 68-83 (ASAPTAAGAGAAAPAE) are compositionally biased toward low complexity. Residues 68–109 (ASAPTAAGAGAAAPAEAAEEEKKEEAKEEEESDEDMGFGLFD) form a disordered region. The segment covering 94–103 (KEEEESDEDM) has biased composition (acidic residues). Ser-99 carries the post-translational modification Phosphoserine.

The protein belongs to the eukaryotic ribosomal protein P1/P2 family. As to quaternary structure, component of the large ribosomal subunit (LSU). Mature yeast ribosomes consist of a small (40S) and a large (60S) subunit. The 40S small subunit contains 1 molecule of ribosomal RNA (18S rRNA) and at least 33 different proteins. The large 60S subunit contains 3 rRNA molecules (25S, 5.8S and 5S rRNA) and at least 46 different proteins. The acidic ribosomal P-proteins form the stalk structure of the 60S subunit. They are organized as a pentameric complex in which uL10/P0 interacts with 2 heterodimers of P1 and P2 proteins.

The protein resides in the cytoplasm. Functionally, component of the ribosome, a large ribonucleoprotein complex responsible for the synthesis of proteins in the cell. The small ribosomal subunit (SSU) binds messenger RNAs (mRNAs) and translates the encoded message by selecting cognate aminoacyl-transfer RNA (tRNA) molecules. The large subunit (LSU) contains the ribosomal catalytic site termed the peptidyl transferase center (PTC), which catalyzes the formation of peptide bonds, thereby polymerizing the amino acids delivered by tRNAs into a polypeptide chain. The nascent polypeptides leave the ribosome through a tunnel in the LSU and interact with protein factors that function in enzymatic processing, targeting, and the membrane insertion of nascent chains at the exit of the ribosomal tunnel. The protein is Large ribosomal subunit protein P1C (rpp103) of Schizosaccharomyces pombe (strain 972 / ATCC 24843) (Fission yeast).